A 408-amino-acid chain; its full sequence is Putative transporter AmpG 2 (408 aa).

The next 12 membrane-spanning stretches (helical) occupy residues 10–30 (YISN…IYLL), 49–69 (IGLF…GPLL), 84–104 (YCLI…TNFN), 109–129 (FIPF…YDML), 154–174 (FRIG…IISW), 177–197 (VYRS…IYPL), 224–244 (WLII…LSIM), 261–281 (LGYK…GGFL), 294–311 (ALIY…LYFY), 315–337 (ITSL…SPFF), 353–373 (IALI…ISGY), and 378–398 (LGWT…YILI).

This sequence belongs to the major facilitator superfamily.

The protein resides in the cell inner membrane. The polypeptide is Putative transporter AmpG 2 (ampG2) (Rickettsia felis (strain ATCC VR-1525 / URRWXCal2) (Rickettsia azadi)).